Reading from the N-terminus, the 1001-residue chain is MSGLGNKRAAGDGGSGPPEKKLSREEKTTTTLIEPIRLGGISSTEEIDLKVLQFKNKKLAERLEQRQACEDELRERIEKLEKRQATDDATLLIVNRYWAQLDETVEALLRCHEGQGELSSAPEAPGTQEGPTCDGTPLPEPGTSELREPLPLQLRPPLSEPALAFVVALGASSSEEVELELQGRMEFSKAAVSHVVEASDRLQRRVEELCQRVYSRGDSEPLSEVARARTRELGRENRRLQDLATQLQEKHHRISLEYSELQDKVTSAETKVLEMETTVEDLQWDIEKLRKREQKLNKHLAEALEQLNSGYYVSGSSSGFQGGQITLSMQKFEMLNAELEENQELANSRMAELEKLQAELQGAVRTNERLKVALRSLPEEVVRETGEYRMLQAQFSLLYNESLQVKTQLDEARGLLLATKNSHLRHIEHMESDELGLQKKLRTEVIQLEDTLAQVRKEYEMLRIEFEQNLAANEQAGPINREMRHLISSLQNHNHQLKGDAQRYKRKLREVQAEIGKLRAQTSGSTHSTPNLGHPEDSGLSAPAPGKEEGGPGPVSTPDNRKEMAPVPGTTTTTTSVKKEELVPSEEDVQGLTLGAQGPSSRGREPEARPKRELREREGPGLGPPPVASALSRADREKAKVEEAKRKESELLKGLRAELKKAQESQKEMKLLLDMYKSAPKEQRDKVQLMAAERKAKAEVDELRSRIRELEERDRRESKKIADGDALRRIRQAEEQIEHLQRKLGATKQEEEALLSEMDVTGQAFEDMQEQNGRLLQQLREKDDANFKLMSERIKANQIHKLLREEKDELGEQVLGLKSQVDAQLLTVQKLEEKERALQGSLGGVEKELTLRSQALELNKRKAVEAAQLAEDLKVQLEHVQTRLREIQPCLAESRAAREKESFNLKRAQEDISRLRRKLEKQRKVEVYADADEILQEEIKEYKARLTCPCCNTRKKDAVLTKCFHVFCFECVRGRYEARQRKCPKCNAAFGAHDFHRIYIS.

The segment at 1-31 is disordered; it reads MSGLGNKRAAGDGGSGPPEKKLSREEKTTTT. Residues 18–28 are compositionally biased toward basic and acidic residues; sequence PEKKLSREEKT. Lys20 carries the post-translational modification N6-acetyllysine. Position 42 is a phosphoserine (Ser42). A coiled-coil region spans residues 45-91; the sequence is EEIDLKVLQFKNKKLAERLEQRQACEDELRERIEKLEKRQATDDATL. The interval 116–149 is disordered; that stretch reads GELSSAPEAPGTQEGPTCDGTPLPEPGTSELREP. Coiled-coil stretches lie at residues 228–377 and 437–523; these read ARTR…LRSL and LQKK…AQTS. 2 positions are modified to N6-acetyllysine: Lys355 and Lys517. The disordered stretch occupies residues 516–646; sequence GKLRAQTSGS…EKAKVEEAKR (131 aa). Positions 520-531 are enriched in polar residues; it reads AQTSGSTHSTPN. A Phosphoserine modification is found at Ser528. Glycyl lysine isopeptide (Lys-Gly) (interchain with G-Cter in SUMO2) cross-links involve residues Lys578 and Lys579. Phosphoserine is present on Ser585. Basic and acidic residues-rich tracts occupy residues 602–619 and 633–646; these read RGRE…EREG and RADR…EAKR. Positions 627–946 form a coiled coil; it reads VASALSRADR…EEIKEYKARL (320 aa). The segment at 948-987 adopts an RING-type zinc-finger fold; that stretch reads CPCCNTRKKDAVLTKCFHVFCFECVRGRYEARQRKCPKCN.

The protein belongs to the BRE1 family. Component of the RNF20/40 complex (also known as BRE1 complex) probably composed of 2 copies of RNF20/BRE1A and 2 copies of RNF40/BRE1B. Interacts with UBE2E1/UBCH6. Interacts with RB1 and WAC.

The protein localises to the nucleus. It carries out the reaction S-ubiquitinyl-[E2 ubiquitin-conjugating enzyme]-L-cysteine + [acceptor protein]-L-lysine = [E2 ubiquitin-conjugating enzyme]-L-cysteine + N(6)-ubiquitinyl-[acceptor protein]-L-lysine.. Its pathway is protein modification; protein ubiquitination. Functionally, component of the RNF20/40 E3 ubiquitin-protein ligase complex that mediates monoubiquitination of 'Lys-120' of histone H2B (H2BK120ub1). H2BK120ub1 gives a specific tag for epigenetic transcriptional activation and is also prerequisite for histone H3 'Lys-4' and 'Lys-79' methylation (H3K4me and H3K79me, respectively). It thereby plays a central role in histone code and gene regulation. The RNF20/40 complex forms a H2B ubiquitin ligase complex in cooperation with the E2 enzyme UBE2A or UBE2B; reports about the cooperation with UBE2E1/UBCH are contradictory. Required for transcriptional activation of Hox genes. The chain is E3 ubiquitin-protein ligase BRE1B (RNF40) from Macaca fascicularis (Crab-eating macaque).